The following is a 312-amino-acid chain: MLKRDCSSVVGSERERDGSSLALKRHCSSVVKLLLPHDVVGLILERLPVESLLRFKCVSNQWKSTIESQCFQERQLIRRMESRGPDVLVVSFADDEDKYGRKAVFGSSIVSTFRFPTLHTLICYGSCEGLICIYCVYSPNIVVNPATKWHRSCPLSNLQQFLDDKFEKKEYDFPTPKLAFGKDKLNGTYKQVWLYNSSEFRLDDVTTCEVFDFSNNAWRYVHPASPYRINDYQDPVYSDGSVHWLTEGKESKILSFHLHTETFQVLCEAPFLRERDPVGDSMCILDNRLCVSEINGPAQLIWSLDSSGGNKC.

In terms of domain architecture, F-box spans 29–80; that stretch reads SVVKLLLPHDVVGLILERLPVESLLRFKCVSNQWKSTIESQCFQERQLIRRM.

The polypeptide is F-box protein At1g11270 (Arabidopsis thaliana (Mouse-ear cress)).